The following is a 123-amino-acid chain: Fluoride-specific ion channel FluC 2 (123 aa).

The next 3 membrane-spanning stretches (helical) occupy residues 30-50, 68-88, and 93-113; these read FPLP…FVAG, VGFI…VLLL, and WPLA…AVWV. Gly72 and Thr75 together coordinate Na(+).

The protein belongs to the fluoride channel Fluc/FEX (TC 1.A.43) family.

It is found in the cell membrane. The catalysed reaction is fluoride(in) = fluoride(out). With respect to regulation, na(+) is not transported, but it plays an essential structural role and its presence is essential for fluoride channel function. In terms of biological role, fluoride-specific ion channel. Important for reducing fluoride concentration in the cell, thus reducing its toxicity. The polypeptide is Fluoride-specific ion channel FluC 2 (Symbiobacterium thermophilum (strain DSM 24528 / JCM 14929 / IAM 14863 / T)).